A 122-amino-acid polypeptide reads, in one-letter code: Ribonuclease P protein component (122 aa).

The protein belongs to the RnpA family. As to quaternary structure, consists of a catalytic RNA component (M1 or rnpB) and a protein subunit.

It carries out the reaction Endonucleolytic cleavage of RNA, removing 5'-extranucleotides from tRNA precursor.. Its function is as follows. RNaseP catalyzes the removal of the 5'-leader sequence from pre-tRNA to produce the mature 5'-terminus. It can also cleave other RNA substrates such as 4.5S RNA. The protein component plays an auxiliary but essential role in vivo by binding to the 5'-leader sequence and broadening the substrate specificity of the ribozyme. The polypeptide is Ribonuclease P protein component (Roseiflexus sp. (strain RS-1)).